A 159-amino-acid polypeptide reads, in one-letter code: Ribosomal RNA large subunit methyltransferase H (159 aa).

S-adenosyl-L-methionine contacts are provided by residues L76, G108, and 127 to 132; that span reads FSKMTF.

The protein belongs to the RNA methyltransferase RlmH family. In terms of assembly, homodimer.

It is found in the cytoplasm. It catalyses the reaction pseudouridine(1915) in 23S rRNA + S-adenosyl-L-methionine = N(3)-methylpseudouridine(1915) in 23S rRNA + S-adenosyl-L-homocysteine + H(+). In terms of biological role, specifically methylates the pseudouridine at position 1915 (m3Psi1915) in 23S rRNA. In Oceanobacillus iheyensis (strain DSM 14371 / CIP 107618 / JCM 11309 / KCTC 3954 / HTE831), this protein is Ribosomal RNA large subunit methyltransferase H.